A 484-amino-acid chain; its full sequence is Glutamyl-tRNA(Gln) amidotransferase subunit A (484 aa).

Catalysis depends on charge relay system residues Lys-76 and Ser-151. Ser-175 serves as the catalytic Acyl-ester intermediate.

This sequence belongs to the amidase family. GatA subfamily. Heterotrimer of A, B and C subunits.

The catalysed reaction is L-glutamyl-tRNA(Gln) + L-glutamine + ATP + H2O = L-glutaminyl-tRNA(Gln) + L-glutamate + ADP + phosphate + H(+). Functionally, allows the formation of correctly charged Gln-tRNA(Gln) through the transamidation of misacylated Glu-tRNA(Gln) in organisms which lack glutaminyl-tRNA synthetase. The reaction takes place in the presence of glutamine and ATP through an activated gamma-phospho-Glu-tRNA(Gln). In Alkalilimnicola ehrlichii (strain ATCC BAA-1101 / DSM 17681 / MLHE-1), this protein is Glutamyl-tRNA(Gln) amidotransferase subunit A.